Here is a 293-residue protein sequence, read N- to C-terminus: Ribosomal protein L11 methyltransferase (293 aa).

Positions 145, 166, 188, and 230 each coordinate S-adenosyl-L-methionine.

It belongs to the methyltransferase superfamily. PrmA family.

The protein resides in the cytoplasm. It carries out the reaction L-lysyl-[protein] + 3 S-adenosyl-L-methionine = N(6),N(6),N(6)-trimethyl-L-lysyl-[protein] + 3 S-adenosyl-L-homocysteine + 3 H(+). In terms of biological role, methylates ribosomal protein L11. This chain is Ribosomal protein L11 methyltransferase, found in Escherichia coli (strain SMS-3-5 / SECEC).